The sequence spans 809 residues: Plasminogen (809 aa).

Residues 1-19 (MDHKEVVLLLLLFLKSGLG) form the signal peptide. Residues 20–98 (DSLDDYVNTQ…RDVVLFEKRI (79 aa)) enclose the PAN domain. 24 disulfide bridges follow: Cys-49–Cys-73, Cys-53–Cys-61, Cys-103–Cys-181, Cys-124–Cys-164, Cys-152–Cys-176, Cys-185–Cys-262, Cys-188–Cys-316, Cys-206–Cys-245, Cys-234–Cys-257, Cys-275–Cys-352, Cys-296–Cys-335, Cys-324–Cys-347, Cys-377–Cys-454, Cys-398–Cys-437, Cys-426–Cys-449, Cys-480–Cys-559, Cys-501–Cys-542, Cys-530–Cys-554, Cys-566–Cys-684, Cys-576–Cys-584, Cys-606–Cys-622, Cys-698–Cys-765, Cys-728–Cys-744, and Cys-755–Cys-783. Kringle domains follow at residues 103–181 (CKTG…IPEC) and 185–262 (CMHC…IPRC). A glycan (O-linked (GalNAc...) threonine) is linked at Thr-268. Kringle domains follow at residues 275-352 (CLKG…IPSC), 377-454 (CYRG…LKKC), and 480-559 (CMFG…VPQC). An N-linked (GlcNAc...) asparagine glycan is attached at Asn-308. A Peptidase S1 domain is found at 580-807 (VVGGCVSIPH…FVTWIEEIMR (228 aa)). Position 596 is a phosphoserine (Ser-596). Active-site charge relay system residues include His-621 and Asp-664. Ser-759 serves as the catalytic Charge relay system.

This sequence belongs to the peptidase S1 family. Plasminogen subfamily. As to quaternary structure, interacts with CSPG4 and AMOT. Interacts (via the Kringle domains) with HRG; the interaction tethers PLG to the cell surface and enhances its activation. Interacts (via Kringle 4 domain) with ADA; the interaction stimulates PLG activation when in complex with DPP4. Angiostatin: Interacts with ATP5F1A; the interaction inhibits most of the angiogenic effects of angiostatin. In terms of processing, N-linked glycan contains N-acetyllactosamine, sialic acid and is core fucosylated. O-linked glycans consist of Gal-GalNAc disaccharide which is modified with up to 2 sialic acid residues (microheterogeneity). Post-translationally, in the presence of the inhibitor, the activation involves only cleavage after Arg-579, yielding two chains held together by two disulfide bonds. In the absence of the inhibitor, the activation involves additionally the removal of the activation peptide.

It is found in the secreted. The enzyme catalyses Preferential cleavage: Lys-|-Xaa &gt; Arg-|-Xaa, higher selectivity than trypsin. Converts fibrin into soluble products.. With respect to regulation, converted into plasmin by plasminogen activators, both plasminogen and its activator being bound to fibrin. Cannot be activated with streptokinase. Functionally, plasmin dissolves the fibrin of blood clots and acts as a proteolytic factor in a variety of other processes including embryonic development, tissue remodeling, tumor invasion, and inflammation. In ovulation, weakens the walls of the Graafian follicle. It activates the urokinase-type plasminogen activator, collagenases and several complement zymogens, such as C1, C4 and C5. Cleavage of fibronectin and laminin leads to cell detachment and apoptosis. Also cleaves fibrin, thrombospondin and von Willebrand factor. Its role in tissue remodeling and tumor invasion may be modulated by CSPG4. Binds to cells. This Sus scrofa (Pig) protein is Plasminogen (PLG).